The sequence spans 271 residues: Tryptophan synthase alpha chain (271 aa).

Residues Glu49 and Asp60 each act as proton acceptor in the active site.

Belongs to the TrpA family. In terms of assembly, tetramer of two alpha and two beta chains.

The enzyme catalyses (1S,2R)-1-C-(indol-3-yl)glycerol 3-phosphate + L-serine = D-glyceraldehyde 3-phosphate + L-tryptophan + H2O. It functions in the pathway amino-acid biosynthesis; L-tryptophan biosynthesis; L-tryptophan from chorismate: step 5/5. In terms of biological role, the alpha subunit is responsible for the aldol cleavage of indoleglycerol phosphate to indole and glyceraldehyde 3-phosphate. The protein is Tryptophan synthase alpha chain of Burkholderia cenocepacia (strain ATCC BAA-245 / DSM 16553 / LMG 16656 / NCTC 13227 / J2315 / CF5610) (Burkholderia cepacia (strain J2315)).